Reading from the N-terminus, the 508-residue chain is MGLPWYRVHTVVLNDPGRLLSVHIMHTALVSGWAGSMALYELAVFDPSDPVLDPMWRQGMFVIPFMTRLGITNSWGGWSITGGTITNPGIWSYEGVAGAHIVFSGLCFLAAIWHWVYWDLEIFCDERTGKPSLDLPKIFGIHLFLSGVACFGFGAFHVTGLYGPGIWVSDPYGLTGKVQPVNPAWGAEGFDPFVPGGIASHHIAAGTLGILAGLFHLSVRPPQRLYKGLRMGNIETVLSSSIAAVFFAAFVVAGTMWYGSATTPIELFGPTRYQWDQGYFQQEIYRRVGAGLAENLSLSEAWSKIPEKLAFYDYIGNNPAKGGLFRAGSMDNGDGIAVGWLGHPVFRDKEGHELFVRRMPTFFETFPVVLVDGDGIVRADVPFRRAESKYSVEQVGVTVEFYGGELNGVSYSDPATVKKYARRAQLGEIFELDRATLKSDGVFRSSPRGWFTFGHATFALLFFFGHIWHGARTLFRDVFAGIDPDLDAQVEFGAFQKLGDPTTRRQVV.

Helical transmembrane passes span 21–36, 101–115, 140–156, 203–218, 237–252, and 457–472; these read SVHI…WAGS, IVFS…IWHW, GIHL…FGAF, IAAG…FHLS, VLSS…AFVV, and TFAL…HGAR.

This sequence belongs to the PsbB/PsbC family. PsbB subfamily. As to quaternary structure, PSII is composed of 1 copy each of membrane proteins PsbA, PsbB, PsbC, PsbD, PsbE, PsbF, PsbH, PsbI, PsbJ, PsbK, PsbL, PsbM, PsbT, PsbX, PsbY, PsbZ, Psb30/Ycf12, at least 3 peripheral proteins of the oxygen-evolving complex and a large number of cofactors. It forms dimeric complexes. The cofactor is Binds multiple chlorophylls. PSII binds additional chlorophylls, carotenoids and specific lipids..

Its subcellular location is the plastid. It localises to the chloroplast thylakoid membrane. In terms of biological role, one of the components of the core complex of photosystem II (PSII). It binds chlorophyll and helps catalyze the primary light-induced photochemical processes of PSII. PSII is a light-driven water:plastoquinone oxidoreductase, using light energy to abstract electrons from H(2)O, generating O(2) and a proton gradient subsequently used for ATP formation. The polypeptide is Photosystem II CP47 reaction center protein (Calycanthus floridus var. glaucus (Eastern sweetshrub)).